A 1190-amino-acid polypeptide reads, in one-letter code: ATPase histone chaperone abo1 (1190 aa).

Over residues 1–11 (MKEEASEHGGS) the composition is skewed to basic and acidic residues. Disordered stretches follow at residues 1–185 (MKEE…RKTH) and 204–253 (YIDS…DLAD). Composition is skewed to acidic residues over residues 52–62 (QEDEGDEDWEE) and 82–106 (SEGD…DSED). Over residues 112 to 131 (VRSKPKYKPGTRRSTRLRNR) the composition is skewed to basic residues. Basic and acidic residues predominate over residues 141-152 (EEHRPILRERTS). 309-314 (PGTGKT) contributes to the ATP binding site. Positions 794–922 (RLLNKLKIKL…ANVLLGVEDM (129 aa)) constitute a Bromo domain.

This sequence belongs to the AAA ATPase family. In terms of assembly, homohexamer. Interacts with the FACT complex subunits spt16 and pob3. Interacts with histone H3-H4 (via N-terminus).

It is found in the nucleus. The protein resides in the chromosome. The enzyme catalyses ATP + H2O = ADP + phosphate + H(+). Its function is as follows. ATPase histone chaperone which facilitates loading of histone H3-H4 onto DNA in an ATP-dependent manner. Plays a genome-wide role in nucleosome organization and establishment of chromatin. Also plays a role in heterochromatin assembly by stabilizing recruitment of the histone methyltransferase clr4 to methylated histone H3, to promote the transition from H3K9me2 to H3K9me3. This is ATPase histone chaperone abo1 from Schizosaccharomyces pombe (strain 972 / ATCC 24843) (Fission yeast).